A 127-amino-acid polypeptide reads, in one-letter code: Methylglyoxal synthase (127 aa).

The region spanning 1-127 is the MGS-like domain; sequence MEKKIALIAH…IKGLESLILR (127 aa). Residues His-10, Lys-14, 36-39, and 56-57 each bind substrate; these read TGTT and SG. Residue Asp-62 is the Proton donor/acceptor of the active site. Substrate is bound at residue His-89.

Belongs to the methylglyoxal synthase family.

It catalyses the reaction dihydroxyacetone phosphate = methylglyoxal + phosphate. Catalyzes the formation of methylglyoxal from dihydroxyacetone phosphate. The sequence is that of Methylglyoxal synthase from Borreliella afzelii (strain PKo) (Borrelia afzelii).